Here is a 31-residue protein sequence, read N- to C-terminus: MLTITSYFGFLLAALTITSALLIGLNKIRLI.

The helical transmembrane segment at 4 to 26 (ITSYFGFLLAALTITSALLIGLN) threads the bilayer.

Belongs to the PetL family. As to quaternary structure, the 4 large subunits of the cytochrome b6-f complex are cytochrome b6, subunit IV (17 kDa polypeptide, PetD), cytochrome f and the Rieske protein, while the 4 small subunits are PetG, PetL, PetM and PetN. The complex functions as a dimer.

The protein localises to the plastid. It is found in the chloroplast thylakoid membrane. Its function is as follows. Component of the cytochrome b6-f complex, which mediates electron transfer between photosystem II (PSII) and photosystem I (PSI), cyclic electron flow around PSI, and state transitions. PetL is important for photoautotrophic growth as well as for electron transfer efficiency and stability of the cytochrome b6-f complex. This is Cytochrome b6-f complex subunit 6 from Amborella trichopoda.